The sequence spans 201 residues: Akirin (201 aa).

The disordered stretch occupies residues 1–133 (MACATLKRAL…PRRPDSPQNL (133 aa)). The short motif at 20–25 (PKRRRC) is the Nuclear localization signal element. A phosphoserine mark is found at serine 39 and serine 41. 2 stretches are compositionally biased toward polar residues: residues 44–57 (GPSTSAGLPHTPSN) and 65–75 (EPSPFSESSLA). Serine 67 is subject to Phosphoserine. Low complexity predominate over residues 112 to 122 (SESSGSEMGPE). A phosphoserine mark is found at serine 123 and serine 129.

Belongs to the akirin family. As to quaternary structure, interacts with dmap1. Interacts with bap60 and rel; interaction is immune stimulation-dependent; activates selected rel target gene promoters. Interacts with bap55; interaction is immune stimulation-dependent. Interacts with twi. In terms of processing, polyubiquitinated via 'Lys-63'-linked ubiquitin by Hyd, promoting interaction with rel. In terms of tissue distribution, ubiquitous.

The protein resides in the nucleus. Its function is as follows. Molecular adapter that acts as a bridge between a variety of multiprotein complexes, and which is required for embryonic development and for normal innate immune response. Acts as a regulator of embryonic myogenesis by bridging Twist (twi) with the SWI/SNF-like Brahma complex, promoting expression of twi-regulated genes during myogenesis. Effector of immune deficiency pathway (Imd) by acting either downstream of, or at the level of, the NF-kappa-B factor Relish (Rel). Acts by bridging the NF-kappa-B factor Rel and the Brahma complex through bap60 interaction, leading to activation a subset of NF-kappa-B factor Relish (Rel) effector genes. Not part of the Toll pathway. Required for the formation of the heart by promoting expression ot tinman (tin). The protein is Akirin of Drosophila melanogaster (Fruit fly).